A 375-amino-acid chain; its full sequence is Succinyl-diaminopimelate desuccinylase (375 aa).

Zn(2+) is bound at residue His66. Residue Asp68 is part of the active site. Position 99 (Asp99) interacts with Zn(2+). Glu133 acts as the Proton acceptor in catalysis. Positions 134, 162, and 348 each coordinate Zn(2+).

It belongs to the peptidase M20A family. DapE subfamily. Homodimer. It depends on Zn(2+) as a cofactor. Requires Co(2+) as cofactor.

The enzyme catalyses N-succinyl-(2S,6S)-2,6-diaminopimelate + H2O = (2S,6S)-2,6-diaminopimelate + succinate. It participates in amino-acid biosynthesis; L-lysine biosynthesis via DAP pathway; LL-2,6-diaminopimelate from (S)-tetrahydrodipicolinate (succinylase route): step 3/3. In terms of biological role, catalyzes the hydrolysis of N-succinyl-L,L-diaminopimelic acid (SDAP), forming succinate and LL-2,6-diaminopimelate (DAP), an intermediate involved in the bacterial biosynthesis of lysine and meso-diaminopimelic acid, an essential component of bacterial cell walls. The chain is Succinyl-diaminopimelate desuccinylase from Escherichia coli O1:K1 / APEC.